The sequence spans 152 residues: MKTFFLKEKQINKKWFVIDAEGLVVGRLAAFVATLLRGKHKPEYTPHMDCGDNVIIINAEKVHFTGKKLKDKIYYKHTGYSGGLKKTTPDNILNGKFPERVIEMAVKRMLDDGPMARRRFENLYVYSGSEHKHQGQQPEKIDFASLNRKNKK.

Belongs to the universal ribosomal protein uL13 family. In terms of assembly, part of the 50S ribosomal subunit.

This protein is one of the early assembly proteins of the 50S ribosomal subunit, although it is not seen to bind rRNA by itself. It is important during the early stages of 50S assembly. The polypeptide is Large ribosomal subunit protein uL13 (Wolbachia sp. subsp. Drosophila simulans (strain wRi)).